The sequence spans 105 residues: Endoribonuclease MazF1 (105 aa).

The protein belongs to the PemK/MazF family. Forms a complex with cognate antitoxin MazE1.

Functionally, toxic component of a type II toxin-antitoxin (TA) system. Acts as an endoribonuclease on single-strand RNA, cleaving between the first and second bases in the sequence UCGCU. Neutralized by coexpression with cognate antitoxin MazE1. In Mycobacterium bovis (strain ATCC BAA-935 / AF2122/97), this protein is Endoribonuclease MazF1 (mazF1).